The sequence spans 150 residues: Head completion nuclease (150 aa).

Active-site residues include glutamate 29, aspartate 68, and lysine 84.

Belongs to the Caudovirales head completion nuclease family.

Its function is as follows. During phage morphogenesis, plays an essential role in the head-tail joining step. The associated nuclease activity is essential for morphogenesis, possibly by cleaving packaged DNA to enable the joining of heads to tails. Displays both exo- and endonuclease activity. In Enterobacteria phage T4 (Bacteriophage T4), this protein is Head completion nuclease (50).